A 260-amino-acid polypeptide reads, in one-letter code: Cytochrome c oxidase subunit 2 (260 aa).

The Mitochondrial intermembrane portion of the chain corresponds to methionine 1–aspartate 41. A helical transmembrane segment spans residues isoleucine 42–tryptophan 62. The Mitochondrial matrix portion of the chain corresponds to histidine 63–threonine 86. Residues isoleucine 87 to methionine 107 traverse the membrane as a helical segment. Residues aspartate 108 to alanine 260 are Mitochondrial intermembrane-facing. Cu cation is bound by residues histidine 187, cysteine 222, glutamate 224, cysteine 226, histidine 230, and methionine 233. Glutamate 224 contributes to the Mg(2+) binding site.

This sequence belongs to the cytochrome c oxidase subunit 2 family. In terms of assembly, component of the cytochrome c oxidase (complex IV, CIV), a multisubunit enzyme composed of a catalytic core of 3 subunits and several supernumerary subunits. The complex exists as a monomer or a dimer and forms supercomplexes (SCs) in the inner mitochondrial membrane with ubiquinol-cytochrome c oxidoreductase (cytochrome b-c1 complex, complex III, CIII). Requires Cu cation as cofactor.

It localises to the mitochondrion inner membrane. It carries out the reaction 4 Fe(II)-[cytochrome c] + O2 + 8 H(+)(in) = 4 Fe(III)-[cytochrome c] + 2 H2O + 4 H(+)(out). In terms of biological role, component of the cytochrome c oxidase, the last enzyme in the mitochondrial electron transport chain which drives oxidative phosphorylation. The respiratory chain contains 3 multisubunit complexes succinate dehydrogenase (complex II, CII), ubiquinol-cytochrome c oxidoreductase (cytochrome b-c1 complex, complex III, CIII) and cytochrome c oxidase (complex IV, CIV), that cooperate to transfer electrons derived from NADH and succinate to molecular oxygen, creating an electrochemical gradient over the inner membrane that drives transmembrane transport and the ATP synthase. Cytochrome c oxidase is the component of the respiratory chain that catalyzes the reduction of oxygen to water. Electrons originating from reduced cytochrome c in the intermembrane space (IMS) are transferred via the dinuclear copper A center (CU(A)) of subunit 2 and heme A of subunit 1 to the active site in subunit 1, a binuclear center (BNC) formed by heme A3 and copper B (CU(B)). The BNC reduces molecular oxygen to 2 water molecules using 4 electrons from cytochrome c in the IMS and 4 protons from the mitochondrial matrix. This Arabidopsis thaliana (Mouse-ear cress) protein is Cytochrome c oxidase subunit 2 (COX2).